The sequence spans 328 residues: D-cysteine desulfhydrase (328 aa).

Lys51 bears the N6-(pyridoxal phosphate)lysine mark.

It belongs to the ACC deaminase/D-cysteine desulfhydrase family. In terms of assembly, homodimer. Pyridoxal 5'-phosphate is required as a cofactor.

It carries out the reaction D-cysteine + H2O = hydrogen sulfide + pyruvate + NH4(+) + H(+). Catalyzes the alpha,beta-elimination reaction of D-cysteine and of several D-cysteine derivatives. It could be a defense mechanism against D-cysteine. The chain is D-cysteine desulfhydrase from Shigella sonnei (strain Ss046).